The following is a 148-amino-acid chain: Small ribosomal subunit protein uS7m (148 aa).

This sequence belongs to the universal ribosomal protein uS7 family. As to quaternary structure, part of the small ribosomal subunit.

The protein localises to the mitochondrion. Functionally, one of the primary rRNA binding proteins, it binds directly to 18S rRNA where it nucleates assembly of the head domain of the small subunit. This is Small ribosomal subunit protein uS7m (RPS7) from Arabidopsis thaliana (Mouse-ear cress).